The following is a 617-amino-acid chain: 1-deoxy-D-xylulose-5-phosphate synthase (617 aa).

Thiamine diphosphate-binding positions include histidine 77 and 118–120; that span reads GHS. Position 149 (aspartate 149) interacts with Mg(2+). Thiamine diphosphate contacts are provided by residues 150–151, asparagine 178, tyrosine 287, and glutamate 368; that span reads GA. Asparagine 178 provides a ligand contact to Mg(2+).

Belongs to the transketolase family. DXPS subfamily. Homodimer. Requires Mg(2+) as cofactor. The cofactor is thiamine diphosphate.

It catalyses the reaction D-glyceraldehyde 3-phosphate + pyruvate + H(+) = 1-deoxy-D-xylulose 5-phosphate + CO2. Its pathway is metabolic intermediate biosynthesis; 1-deoxy-D-xylulose 5-phosphate biosynthesis; 1-deoxy-D-xylulose 5-phosphate from D-glyceraldehyde 3-phosphate and pyruvate: step 1/1. Its function is as follows. Catalyzes the acyloin condensation reaction between C atoms 2 and 3 of pyruvate and glyceraldehyde 3-phosphate to yield 1-deoxy-D-xylulose-5-phosphate (DXP). The polypeptide is 1-deoxy-D-xylulose-5-phosphate synthase (Haemophilus ducreyi (strain 35000HP / ATCC 700724)).